The following is a 265-amino-acid chain: Hydroxyethylthiazole kinase 2 (265 aa).

Met39 is a binding site for substrate. The ATP site is built by Lys115 and Thr168. Gly195 provides a ligand contact to substrate.

This sequence belongs to the Thz kinase family. Requires Mg(2+) as cofactor.

It carries out the reaction 5-(2-hydroxyethyl)-4-methylthiazole + ATP = 4-methyl-5-(2-phosphooxyethyl)-thiazole + ADP + H(+). It participates in cofactor biosynthesis; thiamine diphosphate biosynthesis; 4-methyl-5-(2-phosphoethyl)-thiazole from 5-(2-hydroxyethyl)-4-methylthiazole: step 1/1. Catalyzes the phosphorylation of the hydroxyl group of 4-methyl-5-beta-hydroxyethylthiazole (THZ). The sequence is that of Hydroxyethylthiazole kinase 2 from Clostridium botulinum (strain Kyoto / Type A2).